Consider the following 587-residue polypeptide: 5-aminolevulinate synthase, erythroid-specific, mitochondrial (587 aa).

Residues 1–49 (MVAAAMLLRSCPVLSQGPTGLLGKVAKTYQFLFSIGRCPILATQGPTCS) constitute a mitochondrion transit peptide. Residue Arg-163 participates in succinyl-CoA binding. Pyridoxal 5'-phosphate-binding residues include Cys-258 and Phe-259. Succinyl-CoA-binding residues include Ser-280 and Lys-299. The pyridoxal 5'-phosphate site is built by Ser-332, His-360, and Thr-388. Residue Lys-391 is part of the active site. Lys-391 is modified (N6-(pyridoxal phosphate)lysine). Pyridoxal 5'-phosphate contacts are provided by Thr-420 and Thr-421. A succinyl-CoA-binding site is contributed by Thr-508.

Belongs to the class-II pyridoxal-phosphate-dependent aminotransferase family. As to quaternary structure, homodimer. Interacts with SUCLA2. Pyridoxal 5'-phosphate is required as a cofactor. In terms of tissue distribution, predomnantly expressed in erythroid cells.

It localises to the mitochondrion inner membrane. The protein localises to the mitochondrion. The enzyme catalyses succinyl-CoA + glycine + H(+) = 5-aminolevulinate + CO2 + CoA. The protein operates within porphyrin-containing compound metabolism; protoporphyrin-IX biosynthesis; 5-aminolevulinate from glycine: step 1/1. In terms of biological role, catalyzes the pyridoxal 5'-phosphate (PLP)-dependent condensation of succinyl-CoA and glycine to form aminolevulinic acid (ALA), with CoA and CO2 as by-products. Contributes significantly to heme formation during erythropoiesis. The polypeptide is 5-aminolevulinate synthase, erythroid-specific, mitochondrial (Alas2) (Mus musculus (Mouse)).